The primary structure comprises 134 residues: Small ribosomal subunit protein uS8c (134 aa).

The protein belongs to the universal ribosomal protein uS8 family. Part of the 30S ribosomal subunit.

It is found in the plastid. Its subcellular location is the chloroplast. Functionally, one of the primary rRNA binding proteins, it binds directly to 16S rRNA central domain where it helps coordinate assembly of the platform of the 30S subunit. The chain is Small ribosomal subunit protein uS8c (rps8) from Nicotiana tomentosiformis (Tobacco).